Consider the following 187-residue polypeptide: MSGGVKLIAGLGNPGDQYARTRHNVGAWFLETLAQQRNQSLAKENKFHGFVAKCNDYWLLKPTTFMNESGQAVAALARFYKIKPSEILIAHDELDFPAGDIRLKEGGGHGGHNGLRNIIQHLGSSDFYRLRIGINHPGYKDRVTPYVLSPPSENDRIAILAAIEKGLRLIPELVQGDFQKVMRELHS.

Tyr-18 is a tRNA binding site. His-23 acts as the Proton acceptor in catalysis. TRNA is bound by residues Phe-65, Asn-67, and Asn-113.

Belongs to the PTH family. As to quaternary structure, monomer.

The protein localises to the cytoplasm. The enzyme catalyses an N-acyl-L-alpha-aminoacyl-tRNA + H2O = an N-acyl-L-amino acid + a tRNA + H(+). In terms of biological role, hydrolyzes ribosome-free peptidyl-tRNAs (with 1 or more amino acids incorporated), which drop off the ribosome during protein synthesis, or as a result of ribosome stalling. Its function is as follows. Catalyzes the release of premature peptidyl moieties from peptidyl-tRNA molecules trapped in stalled 50S ribosomal subunits, and thus maintains levels of free tRNAs and 50S ribosomes. The chain is Peptidyl-tRNA hydrolase from Coxiella burnetii (strain CbuK_Q154) (Coxiella burnetii (strain Q154)).